A 250-amino-acid polypeptide reads, in one-letter code: Acetylglutamate kinase (250 aa).

Substrate-binding positions include 41 to 42 (GG), Arg-63, and Asn-156.

The protein belongs to the acetylglutamate kinase family. ArgB subfamily.

The protein resides in the cytoplasm. The catalysed reaction is N-acetyl-L-glutamate + ATP = N-acetyl-L-glutamyl 5-phosphate + ADP. Its pathway is amino-acid biosynthesis; L-arginine biosynthesis; N(2)-acetyl-L-ornithine from L-glutamate: step 2/4. Functionally, catalyzes the ATP-dependent phosphorylation of N-acetyl-L-glutamate. In Listeria monocytogenes serotype 4b (strain F2365), this protein is Acetylglutamate kinase.